The primary structure comprises 363 residues: Uroporphyrinogen decarboxylase (363 aa).

Residues 27–31 (RQAGR), Asp77, Tyr157, Thr212, and His333 contribute to the substrate site.

It belongs to the uroporphyrinogen decarboxylase family. In terms of assembly, homodimer.

The protein localises to the cytoplasm. The catalysed reaction is uroporphyrinogen III + 4 H(+) = coproporphyrinogen III + 4 CO2. Its pathway is porphyrin-containing compound metabolism; protoporphyrin-IX biosynthesis; coproporphyrinogen-III from 5-aminolevulinate: step 4/4. In terms of biological role, catalyzes the decarboxylation of four acetate groups of uroporphyrinogen-III to yield coproporphyrinogen-III. This Cupriavidus necator (strain ATCC 17699 / DSM 428 / KCTC 22496 / NCIMB 10442 / H16 / Stanier 337) (Ralstonia eutropha) protein is Uroporphyrinogen decarboxylase.